The chain runs to 681 residues: PTS system glucose-specific EIICBA component (681 aa).

The PTS EIIC type-1 domain occupies 3–414 (KKLFGQLQRI…LKYKTPGRED (412 aa)). 10 consecutive transmembrane segments (helical) span residues 16–36 (LMLP…GTAM), 73–93 (MIFA…AAIA), 126–146 (ILGI…GALA), 170–190 (FVPI…ALIW), 199–219 (AFST…FGFI), 273–293 (FMQG…LAIY), 303–323 (VVAG…ITEP), 328–348 (FLFV…LSFL), 355–375 (LHLG…GILP), and 383–403 (VIPV…FLIV). Positions 425-506 (TELPYAVLEA…QQIMNGQVVE (82 aa)) constitute a PTS EIIB type-1 domain. Catalysis depends on Cys-447, which acts as the Phosphocysteine intermediate; for EIIB activity. Residues 551–655 (DQVFSEKMMG…SDITPIIVTQ (105 aa)) form the PTS EIIA type-1 domain. Residue His-603 is the Tele-phosphohistidine intermediate; for EIIA activity of the active site.

The protein resides in the cell membrane. It catalyses the reaction N(pros)-phospho-L-histidyl-[protein] + D-glucose(out) = D-glucose 6-phosphate(in) + L-histidyl-[protein]. In terms of biological role, the phosphoenolpyruvate-dependent sugar phosphotransferase system (sugar PTS), a major carbohydrate active transport system, catalyzes the phosphorylation of incoming sugar substrates concomitantly with their translocation across the cell membrane. This system is involved in glucose transport. This chain is PTS system glucose-specific EIICBA component (ptsG), found in Staphylococcus aureus (strain bovine RF122 / ET3-1).